The sequence spans 334 residues: tRNA uridine(34) hydroxylase (334 aa).

Residues 123–217 (SDPDVILVDT…YLEEVKAEES (95 aa)) enclose the Rhodanese domain. The active-site Cysteine persulfide intermediate is Cys-177.

This sequence belongs to the TrhO family.

It carries out the reaction uridine(34) in tRNA + AH2 + O2 = 5-hydroxyuridine(34) in tRNA + A + H2O. Its function is as follows. Catalyzes oxygen-dependent 5-hydroxyuridine (ho5U) modification at position 34 in tRNAs. The chain is tRNA uridine(34) hydroxylase from Shewanella baltica (strain OS185).